The primary structure comprises 527 residues: Putative ribose/galactose/methyl galactoside import ATP-binding protein 2 (527 aa).

The segment at 1–31 (MFTARVARPMAGDDAPAASSGSTGSSAPPAS) is disordered. Residues 12–31 (GDDAPAASSGSTGSSAPPAS) show a composition bias toward low complexity. 2 consecutive ABC transporter domains span residues 38–274 (LEVR…VGRE) and 284–523 (VPIG…RIMD). 70–77 (GENGAGKS) serves as a coordination point for ATP.

The protein belongs to the ABC transporter superfamily. Carbohydrate importer 2 (CUT2) (TC 3.A.1.2) family.

The protein resides in the cell inner membrane. The enzyme catalyses D-ribose(out) + ATP + H2O = D-ribose(in) + ADP + phosphate + H(+). It carries out the reaction D-galactose(out) + ATP + H2O = D-galactose(in) + ADP + phosphate + H(+). Its function is as follows. Part of an ABC transporter complex involved in carbohydrate import. Could be involved in ribose, galactose and/or methyl galactoside import. Responsible for energy coupling to the transport system. This chain is Putative ribose/galactose/methyl galactoside import ATP-binding protein 2, found in Burkholderia lata (strain ATCC 17760 / DSM 23089 / LMG 22485 / NCIMB 9086 / R18194 / 383).